The chain runs to 308 residues: 4-diphosphocytidyl-2-C-methyl-D-erythritol kinase (308 aa).

Residue Lys-23 is part of the active site. 108-118 (PVAAGIGGGSA) contacts ATP. The active site involves Asp-150.

This sequence belongs to the GHMP kinase family. IspE subfamily.

The catalysed reaction is 4-CDP-2-C-methyl-D-erythritol + ATP = 4-CDP-2-C-methyl-D-erythritol 2-phosphate + ADP + H(+). It participates in isoprenoid biosynthesis; isopentenyl diphosphate biosynthesis via DXP pathway; isopentenyl diphosphate from 1-deoxy-D-xylulose 5-phosphate: step 3/6. Catalyzes the phosphorylation of the position 2 hydroxy group of 4-diphosphocytidyl-2C-methyl-D-erythritol. The chain is 4-diphosphocytidyl-2-C-methyl-D-erythritol kinase from Nitrobacter winogradskyi (strain ATCC 25391 / DSM 10237 / CIP 104748 / NCIMB 11846 / Nb-255).